The sequence spans 729 residues: Transketolase (729 aa).

Position 97 (His-97) interacts with substrate. Residues His-138 and 186 to 188 contribute to the thiamine diphosphate site; that span reads GPL. Residue Asp-227 participates in Mg(2+) binding. Residues Gly-228 and Asn-257 each coordinate thiamine diphosphate. 2 residues coordinate Mg(2+): Asn-257 and Ile-259. Residues His-332, Arg-423, and Ser-450 each coordinate substrate. His-332 contributes to the thiamine diphosphate binding site. Glu-477 functions as the Proton donor in the catalytic mechanism. Phe-503 provides a ligand contact to thiamine diphosphate. Residues His-527, Asp-535, and Arg-586 each contribute to the substrate site.

Belongs to the transketolase family. In terms of assembly, homodimer. The cofactor is Mg(2+). Ca(2+) is required as a cofactor. Mn(2+) serves as cofactor. It depends on Co(2+) as a cofactor. Requires thiamine diphosphate as cofactor.

It catalyses the reaction D-sedoheptulose 7-phosphate + D-glyceraldehyde 3-phosphate = aldehydo-D-ribose 5-phosphate + D-xylulose 5-phosphate. Functionally, catalyzes the transfer of a two-carbon ketol group from a ketose donor to an aldose acceptor, via a covalent intermediate with the cofactor thiamine pyrophosphate. The polypeptide is Transketolase (Streptococcus pyogenes serotype M6 (strain ATCC BAA-946 / MGAS10394)).